Consider the following 379-residue polypeptide: Carbamoyl phosphate synthase small chain (379 aa).

The interval 1–189 is CPSase; the sequence is MSKSALLVLE…GLPEAKDDSE (189 aa). L-glutamine is bound by residues S47, G241, and G243. In terms of domain architecture, Glutamine amidotransferase type-1 spans 193–379; sequence HVVAYDFGAK…FIELIKQHSA (187 aa). C269 functions as the Nucleophile in the catalytic mechanism. The L-glutamine site is built by L270, Q273, N311, G313, and F314. Residues H353 and E355 contribute to the active site.

The protein belongs to the CarA family. Composed of two chains; the small (or glutamine) chain promotes the hydrolysis of glutamine to ammonia, which is used by the large (or ammonia) chain to synthesize carbamoyl phosphate. Tetramer of heterodimers (alpha,beta)4.

It catalyses the reaction hydrogencarbonate + L-glutamine + 2 ATP + H2O = carbamoyl phosphate + L-glutamate + 2 ADP + phosphate + 2 H(+). The enzyme catalyses L-glutamine + H2O = L-glutamate + NH4(+). Its pathway is amino-acid biosynthesis; L-arginine biosynthesis; carbamoyl phosphate from bicarbonate: step 1/1. It participates in pyrimidine metabolism; UMP biosynthesis via de novo pathway; (S)-dihydroorotate from bicarbonate: step 1/3. Functionally, small subunit of the glutamine-dependent carbamoyl phosphate synthetase (CPSase). CPSase catalyzes the formation of carbamoyl phosphate from the ammonia moiety of glutamine, carbonate, and phosphate donated by ATP, constituting the first step of 2 biosynthetic pathways, one leading to arginine and/or urea and the other to pyrimidine nucleotides. The small subunit (glutamine amidotransferase) binds and cleaves glutamine to supply the large subunit with the substrate ammonia. In Vibrio vulnificus (strain YJ016), this protein is Carbamoyl phosphate synthase small chain.